The primary structure comprises 98 residues: NADH-ubiquinone oxidoreductase chain 4L (98 aa).

Helical transmembrane passes span 1–21, 29–49, and 61–81; these read MSLV…GLLM, SLLC…LMIL, and IILL…LVMV.

Belongs to the complex I subunit 4L family. In terms of assembly, core subunit of respiratory chain NADH dehydrogenase (Complex I) which is composed of 45 different subunits.

Its subcellular location is the mitochondrion inner membrane. The catalysed reaction is a ubiquinone + NADH + 5 H(+)(in) = a ubiquinol + NAD(+) + 4 H(+)(out). Core subunit of the mitochondrial membrane respiratory chain NADH dehydrogenase (Complex I) which catalyzes electron transfer from NADH through the respiratory chain, using ubiquinone as an electron acceptor. Part of the enzyme membrane arm which is embedded in the lipid bilayer and involved in proton translocation. This Capra hircus (Goat) protein is NADH-ubiquinone oxidoreductase chain 4L (MT-ND4L).